The sequence spans 264 residues: H-2 class II histocompatibility antigen, I-A beta chain (264 aa).

The signal sequence occupies residues 1–31; that stretch reads MVWLPRVPCVAAVILLLTVLSPPVALVRDSR. The beta-1 stretch occupies residues 32 to 121; sequence PWFLEYCKSE…IFDNFLVPRR (90 aa). Residues 32 to 225 are Extracellular-facing; that stretch reads PWFLEYCKSE…KAQSTSAQNK (194 aa). 2 cysteine pairs are disulfide-bonded: Cys-42–Cys-106 and Cys-144–Cys-200. A glycan (N-linked (GlcNAc...) asparagine) is linked at Asn-46. The beta-2 stretch occupies residues 122-215; that stretch reads VEPTVTVYPT…SLTDPVTVEW (94 aa). The region spanning 124-214 is the Ig-like C1-type domain; sequence PTVTVYPTKT…PSLTDPVTVE (91 aa). The tract at residues 216–225 is connecting peptide; sequence KAQSTSAQNK. A helical transmembrane segment spans residues 226-248; the sequence is MLSGVGGFVLGLLFLRAGLFIYF. The Cytoplasmic portion of the chain corresponds to 249-264; sequence RNQKGQSGLQPTGLLS.

Belongs to the MHC class II family. Ubiquitinated in immature dendritic cells leading to down-regulation of MHC class II.

It is found in the membrane. The polypeptide is H-2 class II histocompatibility antigen, I-A beta chain (H2-Eb1) (Mus musculus (Mouse)).